The chain runs to 391 residues: Extracellular metalloproteinase 3 (391 aa).

A propeptide spanning residues 1–9 (HNVVDYVAS) is cleaved from the precursor. Asn-173 carries an N-linked (GlcNAc...) asparagine glycan. His-192 is a binding site for Zn(2+). Glu-193 is a catalytic residue. His-196 contributes to the Zn(2+) binding site. 2 N-linked (GlcNAc...) asparagine glycosylation sites follow: Asn-243 and Asn-385.

Belongs to the peptidase M36 family. It depends on Zn(2+) as a cofactor.

The protein resides in the secreted. Secreted metalloproteinase probably acting as a virulence factor. The chain is Extracellular metalloproteinase 3 (MEP3) from Trichophyton soudanense.